The chain runs to 141 residues: Hemoglobin subunit alpha (141 aa).

In terms of domain architecture, Globin spans 1–141 (VLSAADKTNV…VSTVLTSKYR (141 aa)). Position 3 is a phosphoserine (Ser-3). Lys-7 is modified (N6-succinyllysine). Position 8 is a phosphothreonine (Thr-8). The residue at position 11 (Lys-11) is an N6-succinyllysine. Lys-16 is modified (N6-acetyllysine; alternate). Position 16 is an N6-succinyllysine; alternate (Lys-16). Residue Ser-35 is modified to Phosphoserine. N6-succinyllysine is present on Lys-40. Phosphoserine is present on Ser-49. Residue His-58 coordinates O2. His-87 lines the heme b pocket. Ser-102 carries the post-translational modification Phosphoserine. Thr-108 is subject to Phosphothreonine. A phosphoserine mark is found at Ser-124 and Ser-131. Thr-134 and Thr-137 each carry phosphothreonine. Ser-138 carries the post-translational modification Phosphoserine.

This sequence belongs to the globin family. Heterotetramer of two alpha chains and two beta chains. Red blood cells.

Involved in oxygen transport from the lung to the various peripheral tissues. The chain is Hemoglobin subunit alpha from Sciurus carolinensis (Eastern gray squirrel).